The following is a 333-amino-acid chain: Type II restriction enzyme XcyI (333 aa).

Belongs to the XcyI type II restriction endonuclease family. As to quaternary structure, monomer. Mg(2+) serves as cofactor.

The catalysed reaction is Endonucleolytic cleavage of DNA to give specific double-stranded fragments with terminal 5'-phosphates.. A P subtype restriction enzyme that recognizes the double-stranded sequence 5'-CCCGGG-3' and cleaves after C-1. This Xanthomonas campestris pv. cyanopsidis protein is Type II restriction enzyme XcyI (xcyIR).